A 758-amino-acid polypeptide reads, in one-letter code: 5-methyltetrahydropteroyltriglutamate--homocysteine methyltransferase (758 aa).

Residues 16-19 (RELK) and K116 each bind 5-methyltetrahydropteroyltri-L-glutamate. Residues 436–438 (IGS) and E489 contribute to the L-homocysteine site. L-methionine is bound by residues 436–438 (IGS) and E489. Residues 520–521 (RC) and W566 each bind 5-methyltetrahydropteroyltri-L-glutamate. D604 contributes to the L-homocysteine binding site. Position 604 (D604) interacts with L-methionine. E610 contributes to the 5-methyltetrahydropteroyltri-L-glutamate binding site. H646, C648, and E670 together coordinate Zn(2+). The active-site Proton donor is H699. C731 is a binding site for Zn(2+).

It belongs to the vitamin-B12 independent methionine synthase family. It depends on Zn(2+) as a cofactor.

The enzyme catalyses 5-methyltetrahydropteroyltri-L-glutamate + L-homocysteine = tetrahydropteroyltri-L-glutamate + L-methionine. It functions in the pathway amino-acid biosynthesis; L-methionine biosynthesis via de novo pathway; L-methionine from L-homocysteine (MetE route): step 1/1. Its function is as follows. Catalyzes the transfer of a methyl group from 5-methyltetrahydrofolate to homocysteine resulting in methionine formation. This is 5-methyltetrahydropteroyltriglutamate--homocysteine methyltransferase from Xylella fastidiosa (strain M23).